Here is a 581-residue protein sequence, read N- to C-terminus: Threonine--tRNA ligase (581 aa).

Positions 185 to 478 (DHRKLGKELD…LIEHYGGAFP (294 aa)) are catalytic. Zn(2+) is bound by residues C278, H329, and H455.

The protein belongs to the class-II aminoacyl-tRNA synthetase family. Homodimer. It depends on Zn(2+) as a cofactor.

Its subcellular location is the cytoplasm. It catalyses the reaction tRNA(Thr) + L-threonine + ATP = L-threonyl-tRNA(Thr) + AMP + diphosphate + H(+). In terms of biological role, catalyzes the attachment of threonine to tRNA(Thr) in a two-step reaction: L-threonine is first activated by ATP to form Thr-AMP and then transferred to the acceptor end of tRNA(Thr). Also edits incorrectly charged L-seryl-tRNA(Thr). The sequence is that of Threonine--tRNA ligase from Borreliella afzelii (strain PKo) (Borrelia afzelii).